We begin with the raw amino-acid sequence, 585 residues long: Probable ubiquitin carboxyl-terminal hydrolase 9 (585 aa).

The interval 1–23 (MSLLRWMGMNSPGSTDRRKSTWE) is disordered. The USP domain maps to 41 to 424 (YGLTNYGNTC…TAYVLFYTAA (384 aa)). The active-site Nucleophile is cysteine 50. The segment at 85–110 (CTKTNHPESSSSRHSKKKSMENRKSS) is disordered. Histidine 375 functions as the Proton acceptor in the catalytic mechanism. A compositionally biased stretch (polar residues) spans 447–470 (SQLKQESVEVSNLSSTPRSNSTIT). The interval 447-473 (SQLKQESVEVSNLSSTPRSNSTITYPD) is disordered. Serine 505 is modified (phosphoserine). Disordered stretches follow at residues 511 to 530 (FHSRSVDASPKAVRRESRSF) and 540 to 585 (KFFG…RSKR). The segment covering 542 to 551 (FGSSQSNSPK) has biased composition (polar residues). Residue serine 549 is modified to Phosphoserine. Over residues 553-570 (SPLRDTHKSSDEHSESKH) the composition is skewed to basic and acidic residues. Over residues 574-585 (LPWQFSRSRSKR) the composition is skewed to polar residues.

Belongs to the peptidase C19 family. In terms of assembly, interacts with bun107 and bun62.

The protein localises to the nucleus. It is found in the cytoplasm. It localises to the cell tip. The enzyme catalyses Thiol-dependent hydrolysis of ester, thioester, amide, peptide and isopeptide bonds formed by the C-terminal Gly of ubiquitin (a 76-residue protein attached to proteins as an intracellular targeting signal).. Its function is as follows. Ubiquitin C-terminal hydrolase involved in regulating actin dynamics and/or endocytosis at cell tips and septa. The sequence is that of Probable ubiquitin carboxyl-terminal hydrolase 9 (ubp9) from Schizosaccharomyces pombe (strain 972 / ATCC 24843) (Fission yeast).